Consider the following 489-residue polypeptide: Glutamyl-tRNA(Gln) amidotransferase subunit A (489 aa).

Catalysis depends on charge relay system residues K75 and S150. S174 (acyl-ester intermediate) is an active-site residue.

It belongs to the amidase family. GatA subfamily. In terms of assembly, heterotrimer of A, B and C subunits.

The catalysed reaction is L-glutamyl-tRNA(Gln) + L-glutamine + ATP + H2O = L-glutaminyl-tRNA(Gln) + L-glutamate + ADP + phosphate + H(+). Allows the formation of correctly charged Gln-tRNA(Gln) through the transamidation of misacylated Glu-tRNA(Gln) in organisms which lack glutaminyl-tRNA synthetase. The reaction takes place in the presence of glutamine and ATP through an activated gamma-phospho-Glu-tRNA(Gln). The polypeptide is Glutamyl-tRNA(Gln) amidotransferase subunit A (Gloeobacter violaceus (strain ATCC 29082 / PCC 7421)).